Here is a 708-residue protein sequence, read N- to C-terminus: Chaperonin-containing T-complex member BBS12 (708 aa).

It belongs to the TCP-1 chaperonin family. BBS12 subfamily. Component of the chaperonin-containing T-complex (TRiC), a heterooligomeric complex of about 850 to 900 kDa that forms two stacked rings, 12 to 16 nm in diameter. Interacts with MKKS.

The protein localises to the cell projection. It localises to the cilium. Its function is as follows. Component of the chaperonin-containing T-complex (TRiC), a molecular chaperone complex that assists the folding of proteins upon ATP hydrolysis. As part of the TRiC complex may play a role in the assembly of BBSome, a complex involved in ciliogenesis regulating transports vesicles to the cilia. Involved in adipogenic differentiation. The polypeptide is Chaperonin-containing T-complex member BBS12 (Bbs12) (Mus musculus (Mouse)).